The following is a 643-amino-acid chain: MILEERPDGQGTGEESSRPQDDGSIRKGYGSFVQNQPGQLQSHRARLHQQISKELRMRTGAENLYRATSNTWVRETVALELSYVNSNLQLLKEELAELSTSVDVDQPEGEGITIPMIPLGLKETKELDWATPLKELISEHFGEDGTSFETEIQELEDLRQATRTPSRDEAGLDLLAAYYSQLCFLDARFFSPSRSPGLLFHWYDSLTGVPAQQRALAFEKGSVLFNIGALHTQIGARQDCSCTEGTNHAAEAFQRAAGAFRLLRENFSHAPSPDMSAASLSMLEQLMIAQAQECIFKGLLLPASATPDICPDQLQLAQEAAQVATEYGLVHRAMAQPPVRDYLPASWTNLAHVKAEHFCALAHYHAAMALCESHPAKGELARQEHVFQPSTPHEPLGPTLPQHPEDRRKLAKAHLKRAILGQEEALRLHTLCRVLRKVDLLQVVVTQALRRSLAKYSQLEREDDFFEATEAPDIQPKTHQTPEGPLSVFSTKNRWQLVGPVHMTRGEGSFGFTLRGDSPVLIAAVVPGGQAESAGLKEGDYIVSVNGQPCKWWKHLEVVTQLRSMGEEGVSLQVVSLLPSPEPRGTGPRRAALLWNQRECGFETPMPTRTRPWPILGWSRKNKQGKTGSHPDPCTNRNCVTCP.

Positions 1–43 are disordered; sequence MILEERPDGQGTGEESSRPQDDGSIRKGYGSFVQNQPGQLQSH. Residues 15–25 show a composition bias toward basic and acidic residues; that stretch reads ESSRPQDDGSI. Residues 30–104 form the REM-1 domain; sequence GSFVQNQPGQ…LAELSTSVDV (75 aa). S31 bears the Phosphoserine mark. A compositionally biased stretch (polar residues) spans 32-42; it reads FVQNQPGQLQS. The BRO1 domain maps to 115–462; that stretch reads PMIPLGLKET…LAKYSQLERE (348 aa). Residues 500 to 577 form the PDZ domain; it reads PVHMTRGEGS…EGVSLQVVSL (78 aa).

The protein belongs to the RHPN family. Binds specifically to GTP-Rho. Interacts with ROPN1. As to expression, highly expressed in testis.

In terms of biological role, has no enzymatic activity. May serve as a target for Rho, and interact with some cytoskeletal component upon Rho binding or relay a Rho signal to other molecules. The protein is Rhophilin-1 (Rhpn1) of Mus musculus (Mouse).